Consider the following 89-residue polypeptide: MAITQERKNQLISEFKTHESDTGSPEVQIAILTDSINNLNEHLRTHKKDHHSRRGLLKMVGKRRNLLTYLRNKDVTRYRELINKLGLRR.

Positions 1 to 21 are enriched in basic and acidic residues; sequence MAITQERKNQLISEFKTHESD. Residues 1–23 form a disordered region; the sequence is MAITQERKNQLISEFKTHESDTG.

It belongs to the universal ribosomal protein uS15 family. In terms of assembly, part of the 30S ribosomal subunit. Forms a bridge to the 50S subunit in the 70S ribosome, contacting the 23S rRNA.

Functionally, one of the primary rRNA binding proteins, it binds directly to 16S rRNA where it helps nucleate assembly of the platform of the 30S subunit by binding and bridging several RNA helices of the 16S rRNA. In terms of biological role, forms an intersubunit bridge (bridge B4) with the 23S rRNA of the 50S subunit in the ribosome. In Bacillus velezensis (strain DSM 23117 / BGSC 10A6 / LMG 26770 / FZB42) (Bacillus amyloliquefaciens subsp. plantarum), this protein is Small ribosomal subunit protein uS15.